Here is a 196-residue protein sequence, read N- to C-terminus: Ankyrin repeat domain-containing protein 66 (196 aa).

3 ANK repeats span residues 7-37, 43-72, and 76-105; these read SDMTKLHQAVAAGDYSLVKKILKKGLCDPNY, NDRTPLHWAAIKGQMEVIRLLIEYGARPCL, and VGWTPAHFAAEAGHLNILKTLHALHAAIDA. The tract at residues 152–196 is disordered; that stretch reads ERDEDWDAKKRELELSLPSLNQNMNKKNKKSRGPTRPSNTKGRRV. Positions 187-196 are enriched in polar residues; that stretch reads RPSNTKGRRV.

In Homo sapiens (Human), this protein is Ankyrin repeat domain-containing protein 66 (ANKRD66).